Reading from the N-terminus, the 332-residue chain is Beta-chimaerin (332 aa).

Residues 78 to 128 (THNFKVHTFRGPHWCEYCANFMWGLIAQGVRCSDCGLNVHKQCSKHVPNDC) form a Phorbol-ester/DAG-type zinc finger. A Rho-GAP domain is found at 141-332 (CDLTTLVKAH…ILIENEDVLF (192 aa)).

The protein resides in the membrane. Its activity is regulated as follows. In the inactive state, the N terminus protrudes into the active site of the Rho-GAP domain, sterically blocking Rac binding. Phospholipid binding to the Phorbol-ester/DAG-type zinc-finger/C1 domain triggers the cooperative dissociation of these interactions, allowing the N-terminus to move out of the active site and thereby activating the enzyme. Functionally, GTPase-activating protein for p21-rac. This is Beta-chimaerin (Chn2) from Mus musculus (Mouse).